The following is a 434-amino-acid chain: Enolase (434 aa).

Gln165 provides a ligand contact to (2R)-2-phosphoglycerate. Glu207 acts as the Proton donor in catalysis. Mg(2+)-binding residues include Asp244, Glu291, and Asp318. (2R)-2-phosphoglycerate contacts are provided by Lys343, Arg372, Ser373, and Lys394. Lys343 (proton acceptor) is an active-site residue.

Belongs to the enolase family. The cofactor is Mg(2+).

The protein resides in the cytoplasm. Its subcellular location is the secreted. It localises to the cell surface. The catalysed reaction is (2R)-2-phosphoglycerate = phosphoenolpyruvate + H2O. It functions in the pathway carbohydrate degradation; glycolysis; pyruvate from D-glyceraldehyde 3-phosphate: step 4/5. In terms of biological role, catalyzes the reversible conversion of 2-phosphoglycerate (2-PG) into phosphoenolpyruvate (PEP). It is essential for the degradation of carbohydrates via glycolysis. In Staphylococcus haemolyticus (strain JCSC1435), this protein is Enolase.